Here is an 82-residue protein sequence, read N- to C-terminus: U16-lycotoxin-Ls1a (82 aa).

The first 22 residues, 1-22 (MSPKVQALLLLVGLITFLAVHA), serve as a signal peptide directing secretion. A propeptide spanning residues 23-34 (EEELSETVESER) is cleaved from the precursor. 4 disulfide bridges follow: Cys-36/Cys-51, Cys-43/Cys-56, Cys-50/Cys-67, and Cys-58/Cys-65.

Belongs to the neurotoxin 02 (plectoxin) family. 04 (U16-lycotoxin) subfamily. In terms of tissue distribution, expressed by the venom gland.

The protein localises to the secreted. The sequence is that of U16-lycotoxin-Ls1a from Lycosa singoriensis (Wolf spider).